The following is a 448-amino-acid chain: Methylenetetrahydrofolate--tRNA-(uracil-5-)-methyltransferase TrmFO (448 aa).

Residue 13 to 18 (GAGLAG) participates in FAD binding.

Belongs to the MnmG family. TrmFO subfamily. The cofactor is FAD.

It is found in the cytoplasm. The catalysed reaction is uridine(54) in tRNA + (6R)-5,10-methylene-5,6,7,8-tetrahydrofolate + NADH + H(+) = 5-methyluridine(54) in tRNA + (6S)-5,6,7,8-tetrahydrofolate + NAD(+). The enzyme catalyses uridine(54) in tRNA + (6R)-5,10-methylene-5,6,7,8-tetrahydrofolate + NADPH + H(+) = 5-methyluridine(54) in tRNA + (6S)-5,6,7,8-tetrahydrofolate + NADP(+). Catalyzes the folate-dependent formation of 5-methyl-uridine at position 54 (M-5-U54) in all tRNAs. The polypeptide is Methylenetetrahydrofolate--tRNA-(uracil-5-)-methyltransferase TrmFO (Streptococcus pyogenes serotype M3 (strain ATCC BAA-595 / MGAS315)).